The chain runs to 325 residues: ATPase GET3 (325 aa).

34 to 41 (KGGVGKTT) is an ATP binding site. The active site involves Asp63. 2 residues coordinate ATP: Glu243 and Asn270. Positions 281 and 284 each coordinate Zn(2+).

Belongs to the arsA ATPase family. As to quaternary structure, homodimer.

Its subcellular location is the cytoplasm. The protein localises to the endoplasmic reticulum. ATPase required for the post-translational delivery of tail-anchored (TA) proteins to the endoplasmic reticulum. Recognizes and selectively binds the transmembrane domain of TA proteins in the cytosol. This complex then targets to the endoplasmic reticulum by membrane-bound receptors, where the tail-anchored protein is released for insertion. This process is regulated by ATP binding and hydrolysis. ATP binding drives the homodimer towards the closed dimer state, facilitating recognition of newly synthesized TA membrane proteins. ATP hydrolysis is required for insertion. Subsequently, the homodimer reverts towards the open dimer state, lowering its affinity for the membrane-bound receptor, and returning it to the cytosol to initiate a new round of targeting. In Coccidioides posadasii (strain C735) (Valley fever fungus), this protein is ATPase GET3.